Reading from the N-terminus, the 302-residue chain is Methionyl-tRNA formyltransferase (302 aa).

108–111 contributes to the (6S)-5,6,7,8-tetrahydrofolate binding site; sequence SLLP.

Belongs to the Fmt family.

It catalyses the reaction L-methionyl-tRNA(fMet) + (6R)-10-formyltetrahydrofolate = N-formyl-L-methionyl-tRNA(fMet) + (6S)-5,6,7,8-tetrahydrofolate + H(+). Attaches a formyl group to the free amino group of methionyl-tRNA(fMet). The formyl group appears to play a dual role in the initiator identity of N-formylmethionyl-tRNA by promoting its recognition by IF2 and preventing the misappropriation of this tRNA by the elongation apparatus. The chain is Methionyl-tRNA formyltransferase from Nitratiruptor sp. (strain SB155-2).